The sequence spans 552 residues: Gamma-aminobutyric acid receptor subunit alpha-4 (552 aa).

An N-terminal signal peptide occupies residues 1 to 35; the sequence is MVSVQKVPAIALCSGVSLALLHFLCLAACLNESPG. Over 36-259 the chain is Extracellular; it reads QNSKDEKLCP…FHLRRKMGYF (224 aa). The N-linked (GlcNAc...) asparagine glycan is linked to N47. R100 lines the 4-aminobutanoate pocket. Residues N144 and N157 are each glycosylated (N-linked (GlcNAc...) asparagine). Position 163 (T163) interacts with 4-aminobutanoate. C172 and C186 form a disulfide bridge. The helical transmembrane segment at 260–280 threads the bilayer; that stretch reads MIQTYIPCIMTVILSQVSFWI. At 281 to 284 the chain is on the cytoplasmic side; that stretch reads NKES. The chain crosses the membrane as a helical span at residues 285-305; the sequence is VPARTVFGITTVLTMTTLSIS. Residues 306 to 318 are Extracellular-facing; sequence ARHSLPKVSYATA. The helical transmembrane segment at 319-341 threads the bilayer; that stretch reads MDWFIAVCFAFVFSALIEFAAVN. At 342–515 the chain is on the cytoplasmic side; that stretch reads YFTNIQMQKA…PPPSGSGTSK (174 aa). Disordered stretches follow at residues 353–480 and 492–513; these read KKIS…FGSR and GAAGNVSATPPPPAPPPSGSGT. The segment covering 396-406 has biased composition (basic and acidic residues); that stretch reads SESDVKSRTEV. Positions 407 to 422 are enriched in polar residues; that stretch reads GNHSSKTSAVQESSEA. Positions 445–458 are enriched in low complexity; that stretch reads SAAARGLSSAASPS. The segment covering 500–509 has biased composition (pro residues); that stretch reads TPPPPAPPPS. A helical transmembrane segment spans residues 516–538; the sequence is IDKYARILFPVTFGAFNMVYWVV. At 539-552 the chain is on the extracellular side; it reads YLSKDTMEKSESLM.

Belongs to the ligand-gated ion channel (TC 1.A.9) family. Gamma-aminobutyric acid receptor (TC 1.A.9.5) subfamily. GABRA4 sub-subfamily. As to quaternary structure, heteropentamer, formed by a combination of alpha (GABRA1-6), beta (GABRB1-3), gamma (GABRG1-3), delta (GABRD), epsilon (GABRE), rho (GABRR1-3), pi (GABRP) and theta (GABRQ) chains, each subunit exhibiting distinct physiological and pharmacological properties. As to expression, expressed in the brain.

Its subcellular location is the cell membrane. It localises to the postsynaptic cell membrane. The catalysed reaction is chloride(in) = chloride(out). Its activity is regulated as follows. Potentiated by gaboxadol. Potentiated by histamine. Functionally, alpha subunit of the heteropentameric ligand-gated chloride channel gated by gamma-aminobutyric acid (GABA), a major inhibitory neurotransmitter in the brain. GABA-gated chloride channels, also named GABA(A) receptors (GABAAR), consist of five subunits arranged around a central pore and contain GABA active binding site(s) located at the alpha and beta subunit interface(s). Alpha-4/GABRA4 subunit often assembles with delta or gamma-2 subunits, in combination with beta subunits. When activated by GABA, GABAARs selectively allow the flow of chloride anions across the cell membrane down their electrochemical gradient. GABAARs containing alpha-4 are predominantly extrasynaptic, contributing to tonic inhibition in dentate granule cells and thalamic relay neurons. Extrasynaptic alpha-4-containing GABAARs control levels of excitability and network activity. GABAAR containing alpha-4-beta-3-delta subunits can simultaneously bind GABA and histamine where histamine binds at the interface of two neighboring beta subunits, which may be involved in the regulation of sleep and wakefulness. The sequence is that of Gamma-aminobutyric acid receptor subunit alpha-4 from Mus musculus (Mouse).